An 879-amino-acid polypeptide reads, in one-letter code: Phosphoenolpyruvate carboxylase (879 aa).

Active-site residues include H141 and K546.

This sequence belongs to the PEPCase type 1 family. Mg(2+) serves as cofactor.

It catalyses the reaction oxaloacetate + phosphate = phosphoenolpyruvate + hydrogencarbonate. Forms oxaloacetate, a four-carbon dicarboxylic acid source for the tricarboxylic acid cycle. In Stutzerimonas stutzeri (strain A1501) (Pseudomonas stutzeri), this protein is Phosphoenolpyruvate carboxylase.